Here is a 307-residue protein sequence, read N- to C-terminus: Zinc transporter ZIP9 (307 aa).

A helical membrane pass occupies residues 4–24; sequence FISISLLSLAMLVGCYVAGII. N29 is a glycosylation site (N-linked (GlcNAc...) asparagine). Helical transmembrane passes span 35-55, 106-126, 146-166, 176-196, and 210-230; these read LKLVTVLGAGLLCGTALAVIV, AYIGVSLVLGFVFMLLVDQIG, ITTTLGLVVHAAADGVALGAA, LIVFVAIMLHKAPAAFGLVSF, and HLLVFALAAPVMSMVTYLGLS. N241 is a glycosylation site (N-linked (GlcNAc...) asparagine). 2 helical membrane-spanning segments follow: residues 244 to 264 and 286 to 306; these read GVAMLFSAGTFLYVATVHVLP and LEVAALVLGCLIPLILSVGHQ.

The protein belongs to the ZIP transporter (TC 2.A.5) family. Highly expressed in pancreas, testis, and pituitary and moderately in the kidney, liver, uterus, heart, prostate, and brain, whereas expression is lower in the ovary and colon.

It localises to the golgi apparatus. The protein resides in the trans-Golgi network membrane. The protein localises to the cell membrane. It is found in the cytoplasm. Its subcellular location is the perinuclear region. It localises to the mitochondrion. The protein resides in the nucleus. The enzyme catalyses Zn(2+)(in) = Zn(2+)(out). Transports zinc ions across cell and organelle membranes into the cytoplasm and regulates intracellular zinc homeostasis. Participates in the zinc ions efflux out of the secretory compartments. Regulates intracellular zinc level, resulting in the enhancement of AKT1 and MAPK3/MAPK1 (Erk1/2) phosphorylation in response to the BCR activation. Also functions as a membrane androgen receptor that mediates, through a G protein, the non-classical androgen signaling pathway, characterized by the activation of MAPK3/MAPK1 (Erk1/2) and transcription factors CREB1 or ATF1. This pathway contributes to CLDN1 and CLDN5 expression and tight junction formation between adjacent Sertoli cells. Mediates androgen-induced vascular endothelial cell proliferation through activation of an inhibitory G protein leading to the AKT1 and MAPK3/MAPK1 (Erk1/2) activation which in turn modulate inhibition (phosphorylation) of GSK3B and CCND1 transcription. Moreover, has dual functions as a membrane-bound androgen receptor and as an androgen-dependent zinc transporter both of which are mediated through an inhibitory G protein (Gi) that mediates both MAP kinase and zinc signaling leading to the androgen-dependent apoptotic process. The polypeptide is Zinc transporter ZIP9 (Homo sapiens (Human)).